Here is a 325-residue protein sequence, read N- to C-terminus: uncharacterized protein (325 aa).

2 stretches are compositionally biased toward polar residues: residues methionine 1 to alanine 21 and glutamate 29 to alanine 57. Residues methionine 1 to tyrosine 325 form a disordered region. Over residues glutamate 86–serine 109 the composition is skewed to basic and acidic residues. 2 stretches are compositionally biased toward polar residues: residues asparagine 114–glycine 167 and tyrosine 174–aspartate 193. 2 stretches are compositionally biased toward low complexity: residues tyrosine 200 to histidine 210 and alanine 252 to alanine 278. Residues glutamate 282–tyrosine 325 show a composition bias toward basic and acidic residues.

This is an uncharacterized protein from Schizosaccharomyces pombe (strain 972 / ATCC 24843) (Fission yeast).